A 72-amino-acid chain; its full sequence is UPF0270 protein Ent638_3781 (72 aa).

This sequence belongs to the UPF0270 family.

This chain is UPF0270 protein Ent638_3781, found in Enterobacter sp. (strain 638).